Here is a 775-residue protein sequence, read N- to C-terminus: Dipeptidyl peptidase 4 (775 aa).

Residues 1–15 form the signal peptide; the sequence is MKFLSLLLLAGIAQA. 4 N-linked (GlcNAc...) asparagine glycosylation sites follow: Asn-81, Asn-111, Asn-170, and Asn-219. Residues Ser-613, Asp-690, and His-725 each act as charge relay system in the active site.

It belongs to the peptidase S9B family.

Its subcellular location is the secreted. It catalyses the reaction Release of an N-terminal dipeptide, Xaa-Yaa-|-Zaa-, from a polypeptide, preferentially when Yaa is Pro, provided Zaa is neither Pro nor hydroxyproline.. Its function is as follows. Extracellular dipeptidyl-peptidase which removes N-terminal dipeptides sequentially from polypeptides having unsubstituted N-termini provided that the penultimate residue is proline. Contributes to pathogenicity. The protein is Dipeptidyl peptidase 4 (DPP4) of Trichophyton equinum (Horse ringworm fungus).